The primary structure comprises 398 residues: Phosphoglycerate kinase (398 aa).

Substrate is bound by residues 24 to 26, Arg40, 63 to 66, Arg122, and Arg155; these read DFN and HMGR. ATP is bound by residues Lys206, Gly294, Glu325, and 354–357; that span reads GGDS.

Belongs to the phosphoglycerate kinase family. Monomer.

It localises to the cytoplasm. It catalyses the reaction (2R)-3-phosphoglycerate + ATP = (2R)-3-phospho-glyceroyl phosphate + ADP. The protein operates within carbohydrate degradation; glycolysis; pyruvate from D-glyceraldehyde 3-phosphate: step 2/5. The chain is Phosphoglycerate kinase from Picosynechococcus sp. (strain ATCC 27264 / PCC 7002 / PR-6) (Agmenellum quadruplicatum).